A 196-amino-acid polypeptide reads, in one-letter code: Protein GrpE (196 aa).

The segment at 1-39 (MSSKEQKTPEGQAPEEIIMDQHEEIEAVEPEASAEQVDP) is disordered.

The protein belongs to the GrpE family. As to quaternary structure, homodimer.

It is found in the cytoplasm. Its function is as follows. Participates actively in the response to hyperosmotic and heat shock by preventing the aggregation of stress-denatured proteins, in association with DnaK and GrpE. It is the nucleotide exchange factor for DnaK and may function as a thermosensor. Unfolded proteins bind initially to DnaJ; upon interaction with the DnaJ-bound protein, DnaK hydrolyzes its bound ATP, resulting in the formation of a stable complex. GrpE releases ADP from DnaK; ATP binding to DnaK triggers the release of the substrate protein, thus completing the reaction cycle. Several rounds of ATP-dependent interactions between DnaJ, DnaK and GrpE are required for fully efficient folding. The protein is Protein GrpE of Escherichia coli (strain SMS-3-5 / SECEC).